Consider the following 220-residue polypeptide: Ribonuclease HII (220 aa).

The 189-residue stretch at 32–220 (KHIAGIDEAG…FAPIKGCFDC (189 aa)) folds into the RNase H type-2 domain. The a divalent metal cation site is built by D38, E39, and D130.

The protein belongs to the RNase HII family. Mn(2+) serves as cofactor. The cofactor is Mg(2+).

It localises to the cytoplasm. It carries out the reaction Endonucleolytic cleavage to 5'-phosphomonoester.. Functionally, endonuclease that specifically degrades the RNA of RNA-DNA hybrids. The chain is Ribonuclease HII from Brucella abortus (strain 2308).